Consider the following 715-residue polypeptide: MTDSAIGNVYDPRALPDYDREFIHPDDLRRFENALNDQDVLPLVALNDWRPVYQRVRKTRGRRKEPRRTKDETREGVLYTVLKWPFLAFVLGWISFLGVAYILTRFYIFIYEQWVSWRGKRQSLRKQLYVQTNYRDWLKAAEALDAHLGNHAWKEIDENAYYDHITINKLVSQLRKLRQDAEWEMHHEQVNAAESPAVEELCTILEACVKNNFAGVENPRLYSETYSGTKVLVQEYVDEVKACLELVAESKQISDEDKYHHFKHLDTNFGRTALCLSGGATFAYYHFGVVRALLDNNVLPEIITGTSGGALVAALVATRTDEELKQLLVPALAHRIRACHEGFTTWVRRWWRTGARFDTLEWARQCSWFCRGSTTFREAYERTGRILNVSCVPSDPHSPTILANYLTSPNCVIWSAVLASAAVPGILNPVVLMTKKRDGTLAPYSFGHKWKDGSLRTDIPIKALNLHFNVNFTIVSQVNPHINLFFFSSRGAVGRPVTHRKGRGWRGGFLGSAIEQYIKLDMNKWLRVLRHLELLPRPMGQDWSEIWLQKFSGTVTIWPKTVPSDFYYILSDPTPERLARMIHMGQQSAFPKIQFIKNRLKIEYAIIKGLQQTAPRGGGRATSPTQLRLRNGHGNGPVNPIDERLDQNLPERTGEYSKEADANSAEMSDSSGVDSATASALREARHPRRNSMLVEMQRQSAVFFDDVDSDTWKGQ.

Residues 84-104 (WPFLAFVLGWISFLGVAYILT) form a helical membrane-spanning segment. Residues 274–465 (LCLSGGATFA…RTDIPIKALN (192 aa)) form the PNPLA domain. Positions 305–309 (GTSGG) match the GXSXG motif. The active-site Nucleophile is the S307. The Proton acceptor role is filled by D452. The tract at residues 613 to 715 (TAPRGGGRAT…DVDSDTWKGQ (103 aa)) is disordered. The segment covering 652–661 (RTGEYSKEAD) has biased composition (basic and acidic residues). The segment covering 665–678 (AEMSDSSGVDSATA) has biased composition (polar residues).

Belongs to the PLPL family.

It is found in the membrane. Probable lipid hydrolase. The sequence is that of Patatin-like phospholipase domain-containing protein ATEG_02594 from Aspergillus terreus (strain NIH 2624 / FGSC A1156).